We begin with the raw amino-acid sequence, 439 residues long: uncharacterized protein (439 aa).

The 167-residue stretch at 273 to 439 folds into the VWFA domain; it reads PIIILLDHSG…EARKIYKSIS (167 aa).

This is an uncharacterized protein from Methanocaldococcus jannaschii (strain ATCC 43067 / DSM 2661 / JAL-1 / JCM 10045 / NBRC 100440) (Methanococcus jannaschii).